A 199-amino-acid chain; its full sequence is Thioredoxin peroxidase (199 aa).

Residues 6–165 (AKLNHPAPHF…TLRLVKAFQF (160 aa)) enclose the Thioredoxin domain. The Cysteine sulfenic acid (-SOH) intermediate role is filled by Cys52. Positions 179–199 (PGSKTMKADPNGSQDYFSSMN) are disordered. Polar residues predominate over residues 189-199 (NGSQDYFSSMN).

The protein belongs to the peroxiredoxin family. AhpC/Prx1 subfamily. Homodimer; disulfide-linked, upon oxidation.

It carries out the reaction a hydroperoxide + [thioredoxin]-dithiol = an alcohol + [thioredoxin]-disulfide + H2O. In terms of biological role, thiol-specific peroxidase that catalyzes the reduction of hydrogen peroxide and organic hydroperoxides to water and alcohols, respectively. Plays a role in cell protection against oxidative stress by detoxifying peroxides and as sensor of hydrogen peroxide-mediated signaling events. The polypeptide is Thioredoxin peroxidase (Trypanosoma brucei rhodesiense).